A 99-amino-acid chain; its full sequence is NADH-quinone oxidoreductase subunit K (99 aa).

3 consecutive transmembrane segments (helical) span residues 3 to 23, 28 to 48, and 59 to 79; these read PANY…GVLL, IVMF…FVTF, and MIAF…LAII.

The protein belongs to the complex I subunit 4L family. In terms of assembly, NDH-1 is composed of 14 different subunits. Subunits NuoA, H, J, K, L, M, N constitute the membrane sector of the complex.

It is found in the cell membrane. It carries out the reaction a quinone + NADH + 5 H(+)(in) = a quinol + NAD(+) + 4 H(+)(out). NDH-1 shuttles electrons from NADH, via FMN and iron-sulfur (Fe-S) centers, to quinones in the respiratory chain. The immediate electron acceptor for the enzyme in this species is believed to be a menaquinone. Couples the redox reaction to proton translocation (for every two electrons transferred, four hydrogen ions are translocated across the cytoplasmic membrane), and thus conserves the redox energy in a proton gradient. The sequence is that of NADH-quinone oxidoreductase subunit K from Mycobacterium marinum (strain ATCC BAA-535 / M).